The sequence spans 204 residues: Pectinesterase inhibitor 9 (204 aa).

The signal sequence occupies residues 1-23 (MELKNTIFLVILLSITILQSSSA). N-linked (GlcNAc...) asparagine glycosylation is present at Asn26. Intrachain disulfides connect Cys38/Cys47 and Cys106/Cys157.

This sequence belongs to the PMEI family. Binds reversibly to PME3 to inhibit its activity; the stability of the PME3-PMEI9 complex and the inhibition of the pectin methylesterase (PME) activity is pH-dependent, based on protonation status of amino-acids at the complex interface. Highly expressed in roots and etiolated hypocotyls. Expressed in seedlings, leaves, stems, siliques, floral buds and mature seeds.

It is found in the secreted. The protein resides in the extracellular space. It localises to the apoplast. Pectin methylesterase (PME) inhibitor that probably targets root-expressed PME and PME3 in a moderate pH-dependent manner, mainly in slightly acidic conditions (pH 6.3 and 5.0) and to some extent at pH 7.5; this processus relies on changes in the protonation of amino acids involved in intermolecular and intramolecular interactions. Regulates de-methylesterification of pectins in roots and affects root growth. The protein is Pectinesterase inhibitor 9 of Arabidopsis thaliana (Mouse-ear cress).